Here is a 361-residue protein sequence, read N- to C-terminus: Ribosomal RNA large subunit methyltransferase M (361 aa).

S-adenosyl-L-methionine-binding positions include serine 193, 226–229 (CPGG), aspartate 245, aspartate 265, and aspartate 283. The Proton acceptor role is filled by lysine 312.

It belongs to the class I-like SAM-binding methyltransferase superfamily. RNA methyltransferase RlmE family. RlmM subfamily. Monomer.

The protein localises to the cytoplasm. The catalysed reaction is cytidine(2498) in 23S rRNA + S-adenosyl-L-methionine = 2'-O-methylcytidine(2498) in 23S rRNA + S-adenosyl-L-homocysteine + H(+). Catalyzes the 2'-O-methylation at nucleotide C2498 in 23S rRNA. The protein is Ribosomal RNA large subunit methyltransferase M of Histophilus somni (strain 2336) (Haemophilus somnus).